Here is a 230-residue protein sequence, read N- to C-terminus: MSIDLNEITALMQLASPALPIGGYSYSQGLEAAIDSGIVKDASTAEAWIKDVFLGVFARSEAPLWLLSYKAWAKNDVDSVHNLNDYFLASRETSELRSETEQMGWSLLQIAQSLGWGGECLTQLSAIKPLSLLTAHSYASFYLNIQAKNGLAAYAFSWIENQVAASLKAIPLGQVAGQQALTKIRLLVPEMVHEAEQRANSGLSMVDNFSPMLAILSSRHETQYSRLFRS.

It belongs to the UreF family. UreD, UreF and UreG form a complex that acts as a GTP-hydrolysis-dependent molecular chaperone, activating the urease apoprotein by helping to assemble the nickel containing metallocenter of UreC. The UreE protein probably delivers the nickel.

The protein localises to the cytoplasm. In terms of biological role, required for maturation of urease via the functional incorporation of the urease nickel metallocenter. This is Urease accessory protein UreF from Polynucleobacter asymbioticus (strain DSM 18221 / CIP 109841 / QLW-P1DMWA-1) (Polynucleobacter necessarius subsp. asymbioticus).